The sequence spans 146 residues: Acidic phospholipase A2 2 (146 aa).

Residues 1–21 form the signal peptide; that stretch reads MNPAHLLILAAVCVSSLGASS. Positions 22 to 27 are excised as a propeptide; that stretch reads NRPMPL. Intrachain disulfides connect Cys38–Cys98, Cys53–Cys145, Cys55–Cys71, Cys70–Cys126, Cys77–Cys119, Cys87–Cys112, and Cys105–Cys117. Residues Tyr54, Gly56, and Gly58 each contribute to the Ca(2+) site. His74 is a catalytic residue. A Ca(2+)-binding site is contributed by Asp75. Residue Asp120 is part of the active site.

The protein belongs to the phospholipase A2 family. Group I subfamily. D49 sub-subfamily. The cofactor is Ca(2+). As to expression, expressed by the venom gland.

It is found in the secreted. It catalyses the reaction a 1,2-diacyl-sn-glycero-3-phosphocholine + H2O = a 1-acyl-sn-glycero-3-phosphocholine + a fatty acid + H(+). In terms of biological role, PLA2 catalyzes the calcium-dependent hydrolysis of the 2-acyl groups in 3-sn-phosphoglycerides. The chain is Acidic phospholipase A2 2 from Naja kaouthia (Monocled cobra).